The following is a 186-amino-acid chain: Peptidyl-tRNA hydrolase (186 aa).

Y14 contributes to the tRNA binding site. H19 serves as the catalytic Proton acceptor. Positions 64, 66, and 112 each coordinate tRNA.

The protein belongs to the PTH family. In terms of assembly, monomer.

It is found in the cytoplasm. It catalyses the reaction an N-acyl-L-alpha-aminoacyl-tRNA + H2O = an N-acyl-L-amino acid + a tRNA + H(+). Functionally, hydrolyzes ribosome-free peptidyl-tRNAs (with 1 or more amino acids incorporated), which drop off the ribosome during protein synthesis, or as a result of ribosome stalling. In terms of biological role, catalyzes the release of premature peptidyl moieties from peptidyl-tRNA molecules trapped in stalled 50S ribosomal subunits, and thus maintains levels of free tRNAs and 50S ribosomes. The sequence is that of Peptidyl-tRNA hydrolase from Lachnospira eligens (strain ATCC 27750 / DSM 3376 / VPI C15-48 / C15-B4) (Eubacterium eligens).